A 256-amino-acid chain; its full sequence is DNA repair protein RecO (256 aa).

It belongs to the RecO family.

Functionally, involved in DNA repair and RecF pathway recombination. This is DNA repair protein RecO from Clostridium novyi (strain NT).